Here is a 497-residue protein sequence, read N- to C-terminus: Long chain base biosynthesis protein 2c (497 aa).

A helical transmembrane segment spans residues 4-24 (VPFVTAVTTVFSYGVIFGFGH). K319 is modified (N6-(pyridoxal phosphate)lysine).

Belongs to the class-II pyridoxal-phosphate-dependent aminotransferase family. In terms of assembly, heterodimer with LCB1. Component of the serine palmitoyltransferase (SPT) complex, composed of LCB1 and LCB2. It depends on pyridoxal 5'-phosphate as a cofactor.

It localises to the endoplasmic reticulum membrane. It carries out the reaction L-serine + hexadecanoyl-CoA + H(+) = 3-oxosphinganine + CO2 + CoA. It functions in the pathway lipid metabolism; sphingolipid metabolism. Serine palmitoyltransferase (SPT). The heterodimer formed with LCB1 constitutes the catalytic core. This chain is Long chain base biosynthesis protein 2c, found in Oryza sativa subsp. japonica (Rice).